Consider the following 104-residue polypeptide: PTS system lactose-specific EIIA component (104 aa).

The PTS EIIA type-3 domain maps to 4 to 102 (EEATLLGFEI…MKHLIELYKR (99 aa)). The Tele-phosphohistidine intermediate role is filled by His-78. His-78 carries the post-translational modification Phosphohistidine; by HPr. Asp-81 is a binding site for Mg(2+).

As to quaternary structure, homotrimer. Requires Mg(2+) as cofactor.

The protein resides in the cytoplasm. The phosphoenolpyruvate-dependent sugar phosphotransferase system (sugar PTS), a major carbohydrate active transport system, catalyzes the phosphorylation of incoming sugar substrates concomitantly with their translocation across the cell membrane. The enzyme II LacEF PTS system is involved in lactose transport. The protein is PTS system lactose-specific EIIA component of Streptococcus mutans serotype c (strain ATCC 700610 / UA159).